The following is a 338-amino-acid chain: tRNA N6-adenosine threonylcarbamoyltransferase (338 aa).

Residues histidine 111 and histidine 115 each coordinate Fe cation. Substrate-binding positions include 134–138 (VVSGG), aspartate 167, glycine 180, aspartate 184, and asparagine 272. Aspartate 300 is a binding site for Fe cation.

The protein belongs to the KAE1 / TsaD family. Fe(2+) serves as cofactor.

The protein localises to the cytoplasm. The enzyme catalyses L-threonylcarbamoyladenylate + adenosine(37) in tRNA = N(6)-L-threonylcarbamoyladenosine(37) in tRNA + AMP + H(+). Required for the formation of a threonylcarbamoyl group on adenosine at position 37 (t(6)A37) in tRNAs that read codons beginning with adenine. Is involved in the transfer of the threonylcarbamoyl moiety of threonylcarbamoyl-AMP (TC-AMP) to the N6 group of A37, together with TsaE and TsaB. TsaD likely plays a direct catalytic role in this reaction. This chain is tRNA N6-adenosine threonylcarbamoyltransferase, found in Syntrophus aciditrophicus (strain SB).